A 332-amino-acid chain; its full sequence is MGSSGSMVKPISGFLTALIQYPVPVVESRADIDKQIQQIIKTIHSTKSGYPGLELIVFPEYSTQGLNTKKWTTEEFLCTVPGPETDLFAEACKESKVYGVFSIMEKNPDGGEPYNTAVIIDPQGEMILKYRKLNPWVPVEPWKAGDLGLPVCDGPGGSKLAVCICHDGMFPEVAREAAYKGANVLIRISGYSTQVSEQWMLTNRSNAWQNLMYTLSVNLAGYDGVFYYFGEGQVCNFDGTTLVQGHRNPWEIVTAEVYPELADQARLGWGLENNIYNLGSRGYVATPGGVKENPYTFVKDLAEGKYKVPWEDEIKVKDGSIYGYPVKKTIHS.

A CN hydrolase domain is found at 14–259 (FLTALIQYPV…WEIVTAEVYP (246 aa)). E60 serves as the catalytic Proton acceptor. The Proton donor role is filled by K132. C165 serves as the catalytic Nucleophile.

This sequence belongs to the carbon-nitrogen hydrolase superfamily. Aliphatic amidase family.

The enzyme catalyses formamide + H2O = formate + NH4(+). In terms of biological role, is an aliphatic amidase with a restricted substrate specificity, as it only hydrolyzes formamide. The sequence is that of Formamidase from Bacillus cereus (strain B4264).